The primary structure comprises 81 residues: Sulfur carrier protein TusA (81 aa).

The active-site Cysteine persulfide intermediate is the cysteine 19.

Belongs to the sulfur carrier protein TusA family.

Its subcellular location is the cytoplasm. Its function is as follows. Sulfur carrier protein which probably makes part of a sulfur-relay system. The polypeptide is Sulfur carrier protein TusA (Aeromonas salmonicida (strain A449)).